Reading from the N-terminus, the 323-residue chain is D-alanine--D-alanine ligase (323 aa).

The ATP-grasp domain maps to 120 to 319 (LSVLKPYGIK…LEDLFTNAIE (200 aa)). 148-203 (VKKVGLPCFVKPNKAGSSFGISKVKSEAELPIAIEVAYKEDNEIIIESFLDGTEVS) provides a ligand contact to ATP. Residues Glu-274, Glu-286, and Asn-288 each contribute to the Mg(2+) site.

Belongs to the D-alanine--D-alanine ligase family. The cofactor is Mg(2+). Mn(2+) serves as cofactor.

Its subcellular location is the cytoplasm. It catalyses the reaction 2 D-alanine + ATP = D-alanyl-D-alanine + ADP + phosphate + H(+). It participates in cell wall biogenesis; peptidoglycan biosynthesis. In terms of biological role, cell wall formation. This chain is D-alanine--D-alanine ligase, found in Flavobacterium johnsoniae (strain ATCC 17061 / DSM 2064 / JCM 8514 / BCRC 14874 / CCUG 350202 / NBRC 14942 / NCIMB 11054 / UW101) (Cytophaga johnsonae).